The primary structure comprises 155 residues: UPF0266 membrane protein LMHCC_1856 (155 aa).

The next 3 helical transmembrane spans lie at 8-28, 46-66, and 70-90; these read IFLF…DAVI, RWDG…NTFF, and PFST…ICFF.

The protein belongs to the UPF0266 family.

It localises to the cell membrane. The chain is UPF0266 membrane protein LMHCC_1856 from Listeria monocytogenes serotype 4a (strain HCC23).